The primary structure comprises 390 residues: MATACPPLSLQPAYLSGRSARARRPPPAVRCSAVGEVMAETAAVGTAEEPLLVSAIKGRKVERPPVWLMRQAGRYMKSYQLLCERHPSFRERSENVDLVVEISLQPWKVFKPDGVILFSDILTPLPGMNIPFDIVKGKGPVIFDPLRTAAAVNEVREFVPEEWVPYVGQALNILREEVNNEAAVLGFVGAPFTLASYCVEGGSSKNFSKIKKMAFSEPEILHNLLQKFTTSMANYIKYQADNGAQAVQIFDSWATELSPVDFEEFSLPYLKQIVDSVKETHPELPLILYASGSGGLLERLPLTGVDVVSLDWTVDMAEGRKRLGSNIAVQGNVDPGVLFGSKEFISKRIFDTVQKAGNSGHVLNLGHGIKVGTPEENVAHFFEVAKGIRY.

The N-terminal 30 residues, methionine 1 to arginine 30, are a transit peptide targeting the chloroplast. Substrate contacts are provided by residues arginine 70–arginine 74, phenylalanine 89, serine 119, aspartate 120, tyrosine 197, serine 252, and histidine 367.

It belongs to the uroporphyrinogen decarboxylase family. Homodimer.

The protein resides in the plastid. It localises to the chloroplast. The enzyme catalyses uroporphyrinogen III + 4 H(+) = coproporphyrinogen III + 4 CO2. Its pathway is porphyrin-containing compound metabolism; protoporphyrin-IX biosynthesis; coproporphyrinogen-III from 5-aminolevulinate: step 4/4. Functionally, catalyzes the decarboxylation of four acetate groups of uroporphyrinogen-III to yield coproporphyrinogen-III. The polypeptide is Uroporphyrinogen decarboxylase 2, chloroplastic (Oryza sativa subsp. japonica (Rice)).